Consider the following 245-residue polypeptide: Uridylate kinase (245 aa).

Lysine 12 to glycine 15 lines the ATP pocket. Residues glycine 20 to glycine 25 are involved in allosteric activation by GTP. Residue glycine 54 coordinates UMP. 2 residues coordinate ATP: glycine 55 and arginine 59. Residues aspartate 74 and isoleucine 135–threonine 142 contribute to the UMP site. Positions 163, 169, and 172 each coordinate ATP.

This sequence belongs to the UMP kinase family. As to quaternary structure, homohexamer.

It localises to the cytoplasm. It carries out the reaction UMP + ATP = UDP + ADP. Its pathway is pyrimidine metabolism; CTP biosynthesis via de novo pathway; UDP from UMP (UMPK route): step 1/1. Its activity is regulated as follows. Allosterically activated by GTP. Inhibited by UTP. In terms of biological role, catalyzes the reversible phosphorylation of UMP to UDP. In Streptococcus thermophilus (strain ATCC BAA-491 / LMD-9), this protein is Uridylate kinase.